We begin with the raw amino-acid sequence, 493 residues long: Probable vesicular acetylcholine transporter-B (493 aa).

At 1 to 39 (MQSTGAPGLAQSAVLQLSAMGERSRELGGALREPERKRR) the chain is on the cytoplasmic side. The helical transmembrane segment at 40 to 60 (LLLVVVCVALLLDNMLYMVIV) threads the bilayer. Residues 61 to 86 (PIIPDYLADLRGERGNSSADLDIQIG) are Lumenal, vesicle-facing. N-linked (GlcNAc...) asparagine glycosylation occurs at Asn-76. The chain crosses the membrane as a helical span at residues 87 to 107 (VLFASKALLQLLVNPLSGTFI). Topologically, residues 108-113 (DRVGYD) are cytoplasmic. A helical transmembrane segment spans residues 114–134 (LPLLIGLLVMFLSTCIFAFAE). The Lumenal, vesicle portion of the chain corresponds to 135–143 (NYGTLFAAR). Residues 144–164 (SLQGLGSAFADTSGIAMIADK) traverse the membrane as a helical segment. Residues 165–174 (FTEEAERSRA) lie on the Cytoplasmic side of the membrane. The helical transmembrane segment at 175-195 (LGIALAFISFGSLVAPPFGGI) threads the bilayer. The Lumenal, vesicle portion of the chain corresponds to 196–203 (LYEFAGKR). The chain crosses the membrane as a helical span at residues 204 to 224 (VPFIVLACVCLADGVLLLTVV). Residues 225–247 (KPFSDRTRENMPVGTPIHRLMVD) lie on the Cytoplasmic side of the membrane. Residues 248 to 268 (PYIAVVAGALTVCNIPLAFLE) traverse the membrane as a helical segment. The Lumenal, vesicle segment spans residues 269-284 (PTIANWMESTMDASKW). The chain crosses the membrane as a helical span at residues 285–305 (QMGLVWLPAFLPHVLGVYITV). Residues 306 to 315 (RLAARYPERQ) lie on the Cytoplasmic side of the membrane. A helical membrane pass occupies residues 316 to 336 (WFYGALGMVIIGASSCTVPAC). Residues 337–347 (KTFGELVFPLC) lie on the Lumenal, vesicle side of the membrane. The helical transmembrane segment at 348–368 (GICFGIALVDTALLPTLAFLV) threads the bilayer. The Cytoplasmic segment spans residues 369–378 (DVRHVSVYGS). The chain crosses the membrane as a helical span at residues 379-399 (VYAIADISYSVAYAMGPVVAG). Residues 400–406 (QIVHNLG) lie on the Lumenal, vesicle side of the membrane. A helical transmembrane segment spans residues 407–427 (FVQLNLGMGLVNVLYAPALLL). Residues 428-493 (LRPVCQIKPS…EEEESGPESA (66 aa)) lie on the Cytoplasmic side of the membrane. A disordered region spans residues 467–493 (GLSAGAGTEHGLRGRSEEEEESGPESA). Over residues 483–493 (EEEEESGPESA) the composition is skewed to acidic residues.

The protein belongs to the major facilitator superfamily. Vesicular transporter family.

Its subcellular location is the membrane. Functionally, involved in acetylcholine transport into synaptic vesicles. The protein is Probable vesicular acetylcholine transporter-B (slc18a3b) of Danio rerio (Zebrafish).